Reading from the N-terminus, the 678-residue chain is Protein CASP (678 aa).

The Cytoplasmic portion of the chain corresponds to 1 to 619 (MAANVGSMFQ…LVLSNKMART (619 aa)). Coiled coils occupy residues 67-450 (LLKS…QDLS) and 502-556 (LSII…FLQS). Ser586 is subject to Phosphoserine. The helical; Anchor for type IV membrane protein transmembrane segment at 620-640 (IGFFYTLFLHCLVFLVLYKLA) threads the bilayer. Residues 641-678 (WSESMERDCATFCAKKFADHLHKFHENDNGAAAGDLWQ) lie on the Lumenal side of the membrane.

Belongs to the CASP family. As to quaternary structure, homodimer; disulfide-linked. Interacts with GOLGA5.

It is found in the golgi apparatus membrane. May be involved in intra-Golgi retrograde transport. This is Protein CASP (CUX1) from Homo sapiens (Human).